Here is a 326-residue protein sequence, read N- to C-terminus: Chitinase 12 (326 aa).

The signal sequence occupies residues 1-21; the sequence is MRALAVVAMVATAFLAAAVHA. The region spanning 22–62 is the Chitin-binding type-1 domain; the sequence is EQCGSQAGGAVCPNCLCCSQFGWCGSTSDYCGAGCQSQCSA. 8 disulfide bridges follow: Cys-24–Cys-39, Cys-33–Cys-45, Cys-36–Cys-65, Cys-38–Cys-52, Cys-56–Cys-60, Cys-102–Cys-165, Cys-179–Cys-187, and Cys-286–Cys-318. The active-site Proton donor is the Glu-147.

Belongs to the glycosyl hydrolase 19 family. Chitinase class I subfamily. Expressed in meristems and at lower levels in roots and sheaths.

The catalysed reaction is Random endo-hydrolysis of N-acetyl-beta-D-glucosaminide (1-&gt;4)-beta-linkages in chitin and chitodextrins.. Functionally, hydrolyzes chitin and plays a role in defense against fungal pathogens containing chitin. Its overexpression confers enhanced resistance to sheath blight pathogen (R.solani). This Oryza sativa subsp. japonica (Rice) protein is Chitinase 12 (Cht12).